Consider the following 373-residue polypeptide: CXADR-like membrane protein (373 aa).

Residues 1–18 form the signal peptide; it reads MSLLLLLLLVSYYVGTLG. Ig-like C2-type domains lie at 19–127 and 135–224; these read THTE…VILK and PKCE…VRVT. Topologically, residues 19 to 235 are extracellular; it reads THTEIKRVAE…QYVQSIGMVA (217 aa). 2 cysteine pairs are disulfide-bonded: Cys35/Cys111 and Cys153/Cys208. N-linked (GlcNAc...) asparagine glycosylation is found at Asn74 and Asn197. The helical transmembrane segment at 236–256 threads the bilayer; that stretch reads GAVTGIVAGALLIFLLVWLLI. Residues 257–373 are Cytoplasmic-facing; it reads RRKDKERYEE…PSQSRAFQTV (117 aa). Over residues 264–281 the composition is skewed to basic and acidic residues; that stretch reads YEEEERPNEIREDAEAPK. Residues 264–373 form a disordered region; the sequence is YEEEERPNEI…PSQSRAFQTV (110 aa). The segment covering 288 to 314 has biased composition (low complexity); it reads SSSSSGSRSSRSGSSSTRSTANSASRS. Positions 355–373 are enriched in polar residues; the sequence is KAETTPSMIPSQSRAFQTV.

In terms of tissue distribution, predominantly expressed in epithelial cells within different tissues and in the white adipose tissue. Expressed at high levels in small intestine and placenta, at intermediate levels in the heart, skeletal muscle, colon, spleen, kidney and lung and at low levels in the liver and peripheral blood leukocytes. Highly abundant in the intestine during embryo and fetal development (at protein level).

Its subcellular location is the cell junction. The protein resides in the tight junction. It localises to the cell membrane. Its function is as follows. May be involved in the cell-cell adhesion. May play a role in adipocyte differentiation and development of obesity. Is required for normal small intestine development. The protein is CXADR-like membrane protein (CLMP) of Homo sapiens (Human).